A 112-amino-acid polypeptide reads, in one-letter code: Large ribosomal subunit protein P2 (112 aa).

Over residues 69 to 85 (AGGAAMPAAAAGGAPAA) the composition is skewed to low complexity. Positions 69-112 (AGGAAMPAAAAGGAPAAAEDKAEAKKPEAEPEEEEDDMGFSLFD) are disordered. The segment covering 86 to 97 (AEDKAEAKKPEA) has biased composition (basic and acidic residues).

It belongs to the eukaryotic ribosomal protein P1/P2 family. P1 and P2 exist as dimers at the large ribosomal subunit. In terms of processing, phosphorylated.

In terms of biological role, plays an important role in the elongation step of protein synthesis. The protein is Large ribosomal subunit protein P2 of Babesia bovis.